Here is a 68-residue protein sequence, read N- to C-terminus: Beta-defensin 1 (68 aa).

The first 21 residues, Met-1 to Gly-21, serve as a signal peptide directing secretion. The propeptide occupies Asp-22–Ser-32. Disulfide bonds link Cys-37–Cys-66, Cys-44–Cys-59, and Cys-49–Cys-67.

This sequence belongs to the beta-defensin family. Monomer. Homodimer.

Its subcellular location is the secreted. The protein localises to the membrane. Its function is as follows. Has bactericidal activity. May act as a ligand for C-C chemokine receptor CCR6. Positively regulates the sperm motility and bactericidal activity in a CCR6-dependent manner. Binds to CCR6 and triggers Ca2+ mobilization in the sperm which is important for its motility. This chain is Beta-defensin 1 (DEFB1), found in Cercopithecus erythrogaster (Red-bellied monkey).